The following is a 256-amino-acid chain: Thiazole synthase (256 aa).

Lys-95 functions as the Schiff-base intermediate with DXP in the catalytic mechanism. Residues Gly-156, 182–183, and 204–205 each bind 1-deoxy-D-xylulose 5-phosphate; these read AG and NT.

Belongs to the ThiG family. As to quaternary structure, homotetramer. Forms heterodimers with either ThiH or ThiS.

It is found in the cytoplasm. The catalysed reaction is [ThiS sulfur-carrier protein]-C-terminal-Gly-aminoethanethioate + 2-iminoacetate + 1-deoxy-D-xylulose 5-phosphate = [ThiS sulfur-carrier protein]-C-terminal Gly-Gly + 2-[(2R,5Z)-2-carboxy-4-methylthiazol-5(2H)-ylidene]ethyl phosphate + 2 H2O + H(+). The protein operates within cofactor biosynthesis; thiamine diphosphate biosynthesis. Its function is as follows. Catalyzes the rearrangement of 1-deoxy-D-xylulose 5-phosphate (DXP) to produce the thiazole phosphate moiety of thiamine. Sulfur is provided by the thiocarboxylate moiety of the carrier protein ThiS. In vitro, sulfur can be provided by H(2)S. This Escherichia coli (strain 55989 / EAEC) protein is Thiazole synthase.